A 268-amino-acid polypeptide reads, in one-letter code: DNA repair protein RecO (268 aa).

Belongs to the RecO family.

Involved in DNA repair and RecF pathway recombination. The chain is DNA repair protein RecO from Parasynechococcus marenigrum (strain WH8102).